The sequence spans 334 residues: MAVFTPVTNAEIALWLEQYDVGTVRALRGIPSGIENTNFFLTTEKDGATHEYVVTLFERLTSEQLPFYLYLMQHLAQHGICVPAPIPGRDGAILRPLKGKPATIVTRLPGRSNLAPTTSECAIVGDMLARMHLAGRDYPRHQPNLRSLPWWNEVVPDIQPFVQGATRELLVAELAHQQRFFGSADYAALPEGPCHCDLFRDNVLFEPATDSQPERLGGFFDFYFAGVDKWLFDVAVTVNDWCVDLATGALDAERMRAMLRAYHAVRPFTDAEARHWRDMLRAAAYRFWVSRLWDFHLPRDAELLQPHDPTHFERVLRERVRAEGLTLDIPEPCN.

The protein belongs to the pseudomonas-type ThrB family.

It catalyses the reaction L-homoserine + ATP = O-phospho-L-homoserine + ADP + H(+). The protein operates within amino-acid biosynthesis; L-threonine biosynthesis; L-threonine from L-aspartate: step 4/5. In Ralstonia nicotianae (strain ATCC BAA-1114 / GMI1000) (Ralstonia solanacearum), this protein is Homoserine kinase.